Consider the following 102-residue polypeptide: Large ribosomal subunit protein bL21 (102 aa).

Belongs to the bacterial ribosomal protein bL21 family. In terms of assembly, part of the 50S ribosomal subunit. Contacts protein L20.

Functionally, this protein binds to 23S rRNA in the presence of protein L20. This chain is Large ribosomal subunit protein bL21, found in Latilactobacillus sakei subsp. sakei (strain 23K) (Lactobacillus sakei subsp. sakei).